A 411-amino-acid chain; its full sequence is GPI-anchor transamidase (411 aa).

Residues 1–22 (MRIAMHLPLLLLYIFLLPLSGA) form the signal peptide. Topologically, residues 23–376 (NNTDAAHEVI…DIDSNECFFT (354 aa)) are lumenal. Residues histidine 157 and cysteine 199 contribute to the active site. 2 N-linked (GlcNAc...) asparagine glycosylation sites follow: asparagine 256 and asparagine 346. The helical transmembrane segment at 377–397 (SFKQSATIILALIVTILWFML) threads the bilayer. The Cytoplasmic segment spans residues 398–411 (RGNTAKATYDLYTN).

Belongs to the peptidase C13 family. In terms of assembly, forms a complex with CDC91, GPI16, GPI17 and GAA1. The disulfide bond between GPI8 and GPI16 is important for normal enzyme activity.

It localises to the endoplasmic reticulum membrane. It functions in the pathway glycolipid biosynthesis; glycosylphosphatidylinositol-anchor biosynthesis. In terms of biological role, mediates GPI anchoring in the endoplasmic reticulum, by replacing a protein's C-terminal GPI attachment signal peptide with a pre-assembled GPI. During this transamidation reaction, the GPI transamidase forms a carbonyl intermediate with the substrate protein. The sequence is that of GPI-anchor transamidase (GPI8) from Saccharomyces cerevisiae (strain ATCC 204508 / S288c) (Baker's yeast).